The chain runs to 131 residues: Lysozyme C (131 aa).

In terms of domain architecture, C-type lysozyme spans 2–131; sequence KIYEQCELAR…VSQWIKGCKL (130 aa). Intrachain disulfides connect Cys-7-Cys-129, Cys-31-Cys-117, Cys-66-Cys-82, and Cys-78-Cys-96. Active-site residues include Glu-36 and Asp-54.

Belongs to the glycosyl hydrolase 22 family. As to quaternary structure, monomer.

It localises to the secreted. It catalyses the reaction Hydrolysis of (1-&gt;4)-beta-linkages between N-acetylmuramic acid and N-acetyl-D-glucosamine residues in a peptidoglycan and between N-acetyl-D-glucosamine residues in chitodextrins.. Its function is as follows. Lysozymes have primarily a bacteriolytic function; those in tissues and body fluids are associated with the monocyte-macrophage system and enhance the activity of immunoagents. Has strong bacteriolytic activity against M.luteus and V.cholerae, weak bacteriolytic activity against P.aeruginosa and no activity against A.hydrophila. This Pelodiscus sinensis (Chinese softshell turtle) protein is Lysozyme C (LYZ).